The sequence spans 300 residues: Protein ARMCX6 (300 aa).

Over 1–6 (MGRARE) the chain is Mitochondrial intermembrane. Mitochondrion outer membrane (MOM)-targeting sequence regions lie at residues 1–6 (MGRARE) and 26–36 (KLTIGRDDSEK). A helical; Signal-anchor membrane pass occupies residues 7–27 (VGWMAAGLMIGAGACYCVYKL). At 28–300 (TIGRDDSEKL…REILLETPAP (273 aa)) the chain is on the cytoplasmic side. Disordered regions lie at residues 35–54 (EKLE…LDEE) and 69–99 (WTED…RAHP).

Belongs to the eutherian X-chromosome-specific Armcx family.

The protein localises to the mitochondrion. Its subcellular location is the mitochondrion outer membrane. In terms of biological role, may regulate the dynamics and distribution of mitochondria in neural cells. This Homo sapiens (Human) protein is Protein ARMCX6 (ARMCX6).